The sequence spans 209 residues: Orotate phosphoribosyltransferase (209 aa).

5-phospho-alpha-D-ribose 1-diphosphate is bound by residues Arg98, Lys102, His104, and 124–132; that span reads EDLISTGKS. Ser128 contributes to the orotate binding site.

It belongs to the purine/pyrimidine phosphoribosyltransferase family. PyrE subfamily. As to quaternary structure, homodimer. Requires Mg(2+) as cofactor.

The enzyme catalyses orotidine 5'-phosphate + diphosphate = orotate + 5-phospho-alpha-D-ribose 1-diphosphate. It participates in pyrimidine metabolism; UMP biosynthesis via de novo pathway; UMP from orotate: step 1/2. Catalyzes the transfer of a ribosyl phosphate group from 5-phosphoribose 1-diphosphate to orotate, leading to the formation of orotidine monophosphate (OMP). The polypeptide is Orotate phosphoribosyltransferase (Malacoplasma penetrans (strain HF-2) (Mycoplasma penetrans)).